The chain runs to 436 residues: MSSPGTESAGKSLQYRVDHLLSAVESELQAGSEKGDPTERELRVGLEESELWLRFKELTNEMIVTKNGRRMFPVLKVNVSGLDPNAMYSFLLDFVTADNHRWKYVNGEWVPGGKPEPQAPSCVYIHPDSPNFGAHWMKAPVSFSKVKLTNKLNGGGQIMLNSLHKYEPRIHIVRVGGPQRMITSHCFPETQFIAVTAYQNEEITALKIKYNPFAKAFLDAKERNDHKDVMEEPGDCQQPGYSQWGWLVPGAGTLCPPASSHPQFGGSLSLPSTHGCERYPALRNHRSSPYPSPYAHRNSSPTYADNSSACLSMLQSHDNWSSLGVPGHTSMLPVSHNASPPTGSSQYPSLWSVSNGTITPGSQTAGVSNGLGAQFFRGSPAHYTPLTHTVSAATSSSSGSPMYEGAATVTDISDSQYDTAQSLLIASWTPVSPPSM.

The segment at residues 51 to 219 (LWLRFKELTN…YNPFAKAFLD (169 aa)) is a DNA-binding region (T-box).

Monomer. Binds DNA as a monomer.

Its subcellular location is the nucleus. Its function is as follows. Involved in the transcriptional regulation of genes required for mesoderm formation and differentiation. Binds to a palindromic T site 5'-TTCACACCTAGGTGTGAA-3' DNA sequence and activates gene transcription when bound to such a site. This chain is T-box transcription factor T, found in Mus musculus (Mouse).